The primary structure comprises 218 residues: Adenylate kinase (218 aa).

Residue 10-15 coordinates ATP; sequence GAGKGT. Positions 30-59 are NMP; that stretch reads STGDMLRAAVKAGTPLGQQAKAVMESGGLV. AMP is bound by residues Thr31, Arg36, 57–59, 85–88, and Gln92; these read GLV and GFPR. Residues 122–159 form an LID region; the sequence is GRRSHPASGRTYHVKFNPPKVEGKDDITGEDLIQRKDD. ATP contacts are provided by residues Arg123 and 132-133; that span reads TY. AMP-binding residues include Arg156 and Arg167. Gly203 is a binding site for ATP.

It belongs to the adenylate kinase family. Monomer.

The protein localises to the cytoplasm. The catalysed reaction is AMP + ATP = 2 ADP. It functions in the pathway purine metabolism; AMP biosynthesis via salvage pathway; AMP from ADP: step 1/1. Functionally, catalyzes the reversible transfer of the terminal phosphate group between ATP and AMP. Plays an important role in cellular energy homeostasis and in adenine nucleotide metabolism. The protein is Adenylate kinase of Variovorax paradoxus (strain S110).